The sequence spans 361 residues: Phospho-N-acetylmuramoyl-pentapeptide-transferase (361 aa).

Transmembrane regions (helical) follow at residues P10–I30, L40–P60, G84–V104, G107–I127, L147–I167, W175–A195, L206–M226, G232–L252, V260–L280, L288–F308, and V341–P361.

This sequence belongs to the glycosyltransferase 4 family. MraY subfamily. The cofactor is Mg(2+).

Its subcellular location is the cell inner membrane. The catalysed reaction is UDP-N-acetyl-alpha-D-muramoyl-L-alanyl-gamma-D-glutamyl-meso-2,6-diaminopimeloyl-D-alanyl-D-alanine + di-trans,octa-cis-undecaprenyl phosphate = di-trans,octa-cis-undecaprenyl diphospho-N-acetyl-alpha-D-muramoyl-L-alanyl-D-glutamyl-meso-2,6-diaminopimeloyl-D-alanyl-D-alanine + UMP. The protein operates within cell wall biogenesis; peptidoglycan biosynthesis. In terms of biological role, catalyzes the initial step of the lipid cycle reactions in the biosynthesis of the cell wall peptidoglycan: transfers peptidoglycan precursor phospho-MurNAc-pentapeptide from UDP-MurNAc-pentapeptide onto the lipid carrier undecaprenyl phosphate, yielding undecaprenyl-pyrophosphoryl-MurNAc-pentapeptide, known as lipid I. The polypeptide is Phospho-N-acetylmuramoyl-pentapeptide-transferase (Synechococcus sp. (strain RCC307)).